Reading from the N-terminus, the 457-residue chain is BAG family molecular chaperone regulator 4 (457 aa).

Residues 1 to 101 (MSALRRSGYG…QPPYPSYNSN (101 aa)) are disordered. At Ser-7 the chain carries Phosphoserine. Residues 8–20 (GYGPSDGPSYGRY) show a composition bias toward low complexity. A compositionally biased stretch (pro residues) spans 30 to 47 (VHPPPPLYPLRPEPPQPP). Omega-N-methylarginine occurs at positions 40, 53, and 108. Disordered regions lie at residues 113-136 (YPST…NGAY), 166-333 (STEV…DDSD), and 347-377 (LYGN…ESTP). Positions 166-182 (STEVPSTYRSSGNSPTP) are enriched in polar residues. Residue Arg-185 is modified to Omega-N-methylarginine. Low complexity-rich tracts occupy residues 274-284 (STSPWPSSGSP) and 294-308 (QPKD…SDQS). 2 stretches are compositionally biased toward polar residues: residues 320–333 (QYES…DDSD) and 347–365 (LYGN…SSSL). The 78-residue stretch at 379-456 (SIKKIIHVLE…AILEKLEKKG (78 aa)) folds into the BAG domain.

Binds to the ATPase domain of HSP/HSC70 chaperones. Binds to the death domain of TNFRSF1A in the absence of TNF and thereby prevents binding of adapter molecules such as TRADD or TRAF2. Binds to the death domain of TNFRSF12. Interacts with PRKN. In terms of tissue distribution, ubiquitous.

The protein resides in the cytoplasm. Functionally, inhibits the chaperone activity of HSP70/HSC70 by promoting substrate release. Prevents constitutive TNFRSF1A signaling. Negative regulator of PRKN translocation to damaged mitochondria. This Homo sapiens (Human) protein is BAG family molecular chaperone regulator 4 (BAG4).